A 452-amino-acid chain; its full sequence is UDP-N-acetylmuramate--L-alanine ligase (452 aa).

ATP is bound at residue 110-116 (GTHGKTT).

The protein belongs to the MurCDEF family.

It localises to the cytoplasm. It catalyses the reaction UDP-N-acetyl-alpha-D-muramate + L-alanine + ATP = UDP-N-acetyl-alpha-D-muramoyl-L-alanine + ADP + phosphate + H(+). Its pathway is cell wall biogenesis; peptidoglycan biosynthesis. Functionally, cell wall formation. In Francisella philomiragia subsp. philomiragia (strain ATCC 25017 / CCUG 19701 / FSC 153 / O#319-036), this protein is UDP-N-acetylmuramate--L-alanine ligase.